We begin with the raw amino-acid sequence, 288 residues long: Thymidylate synthase (288 aa).

R21 serves as a coordination point for dUMP. N51 contributes to the (6R)-5,10-methylene-5,6,7,8-tetrahydrofolate binding site. Position 150 to 151 (150 to 151 (RR)) interacts with dUMP. C170 functions as the Nucleophile in the catalytic mechanism. DUMP is bound by residues 190–193 (RSGD), N201, and 231–233 (HIY). Residue D193 coordinates (6R)-5,10-methylene-5,6,7,8-tetrahydrofolate. Residue A287 coordinates (6R)-5,10-methylene-5,6,7,8-tetrahydrofolate.

The protein belongs to the thymidylate synthase family. Bacterial-type ThyA subfamily. As to quaternary structure, homodimer.

The protein resides in the cytoplasm. The enzyme catalyses dUMP + (6R)-5,10-methylene-5,6,7,8-tetrahydrofolate = 7,8-dihydrofolate + dTMP. It functions in the pathway pyrimidine metabolism; dTTP biosynthesis. Its function is as follows. Catalyzes the reductive methylation of 2'-deoxyuridine-5'-monophosphate (dUMP) to 2'-deoxythymidine-5'-monophosphate (dTMP) while utilizing 5,10-methylenetetrahydrofolate (mTHF) as the methyl donor and reductant in the reaction, yielding dihydrofolate (DHF) as a by-product. This enzymatic reaction provides an intracellular de novo source of dTMP, an essential precursor for DNA biosynthesis. This is Thymidylate synthase from Phytoplasma mali (strain AT).